The primary structure comprises 119 residues: Phosphoribosyl-AMP cyclohydrolase (119 aa).

Residue D77 coordinates Mg(2+). A Zn(2+)-binding site is contributed by C78. Mg(2+)-binding residues include D79 and D81. 2 residues coordinate Zn(2+): C94 and C101.

This sequence belongs to the PRA-CH family. As to quaternary structure, homodimer. Mg(2+) serves as cofactor. Requires Zn(2+) as cofactor.

It is found in the cytoplasm. It carries out the reaction 1-(5-phospho-beta-D-ribosyl)-5'-AMP + H2O = 1-(5-phospho-beta-D-ribosyl)-5-[(5-phospho-beta-D-ribosylamino)methylideneamino]imidazole-4-carboxamide. It participates in amino-acid biosynthesis; L-histidine biosynthesis; L-histidine from 5-phospho-alpha-D-ribose 1-diphosphate: step 3/9. In terms of biological role, catalyzes the hydrolysis of the adenine ring of phosphoribosyl-AMP. The chain is Phosphoribosyl-AMP cyclohydrolase from Cereibacter sphaeroides (strain ATCC 17025 / ATH 2.4.3) (Rhodobacter sphaeroides).